A 246-amino-acid chain; its full sequence is MyoD family inhibitor domain-containing protein (246 aa).

2 disordered regions span residues 1–93 (MSQE…EEET) and 134–164 (KIQS…ASPE). The Extracellular portion of the chain corresponds to 1–170 (MSQEREPFSP…ASPEDGCVHC (170 aa)). The segment covering 63-87 (EDNSNSQPIKAQPQRLPQPNTSALE) has biased composition (polar residues). One can recognise an MDFI domain in the interval 74–246 (QPQRLPQPNT…MECCGICFPS (173 aa)). A helical transmembrane segment spans residues 171–188 (ILTCLFCEFLTLCNIVVG). At 189-246 (QASCGICTSEACCCCCTEEMGDDCNCPCDMDCGIMDACCESSDCLEICMECCGICFPS) the chain is on the cytoplasmic side.

It belongs to the MDFI family. Expressed broadly at a low level in the early embryo.

The protein resides in the cytoplasm. It localises to the cell membrane. It is found in the secreted. Required to control the activity of various transcription factors through their sequestration in the cytoplasm. Retains nuclear Zic proteins in the cytoplasm and inhibits their transcriptional activation. Required for dorsoanterior development. Necessary for siamois to activate downstream target genes, including gsc, during execution of the dorsal organizer program. Also regulates the transcriptional activity of TCF7L1/TCF3 by interacting directly with TCF7L1/TCF3 and preventing it from binding DNA. Involved in the development of lymphatic vessel valves. It is required to promote lymphatic endothelial cell migration, in a process that involves down-regulation of integrin beta 1 activation and control of cell adhesion to the extracellular matrix. This is MyoD family inhibitor domain-containing protein from Xenopus laevis (African clawed frog).